Reading from the N-terminus, the 390-residue chain is Probable inactive secreted aspartyl protease (390 aa).

A signal peptide spans 1 to 20; it reads MQLTIKALVGILTTISAATA. A propeptide spans 21 to 69 (removed in mature form); it reads VSFDMENLGAEKRGVSGEELHMLHGNEVLARFANGVYPEVANGTRVSKR. Residue N62 is glycosylated (N-linked (GlcNAc...) asparagine). The Peptidase A1 domain occupies 86-388; sequence WAVKAKIGSN…KFDSNEMQIA (303 aa). Residues D104 and D273 contribute to the active site. An intrachain disulfide couples C313 to C346.

This sequence belongs to the peptidase A1 family.

Its subcellular location is the secreted. Functionally, probable inactive secreted aspartyl protease. May promote an inflammatory immune response in the host when the host skin barrier is breached. Has no detectable protease activity in vitro on fluorogenic substrates, a peptide library, or with the general protease substrate casein. The presence of the enzyme also does not affect the activity of the secreted aspartyl protease SAP1. The chain is Probable inactive secreted aspartyl protease from Malassezia globosa (strain ATCC MYA-4612 / CBS 7966) (Dandruff-associated fungus).